The sequence spans 650 residues: MASNMDREMILADFQACTGIENIDEAITLLEQNNWDLVAAINGVIPQENGILQSEYGGETIPGPAFNPASHPASAPTSSSSSAFRPVMPSRQIVERQPRMLDFRVEYRDRNVDVVLEDTCTVGEIKQILENELQIPVSKMLLKGWKTGDVEDSTVLKSLHLPKNNSLYVLTPDLPPPSSSSHAGALQESLNQNFMLIITHREVQREYNLNFSGSSTIQEVKRNVYDLTSIPVRHQLWEGWPTSATDDSMCLAESGLSYPCHRLTVGRRSSPAQTREQSEEQITDVHMVSDSDGDDFEDATEFGVDDGEVFGMASSALRKSPMMPENAENEGDALLQFTAEFSSRYGDCHPVFFIGSLEAAFQEAFYVKARDRKLLAIYLHHDESVLTNVFCSQMLCAESIVSYLSQNFITWAWDLTKDSNRARFLTMCNRHFGSVVAQTIRTQKTDQFPLFLIIMGKRSSNEVLNVIQGNTTVDELMMRLMAAMEIFTAQQQEDIKDEDEREARENVKREQDEAYRLSLEADRAKREAHEREMAEQFRLEQIRKEQEEEREAIRLSLEQALPPEPKEENAEPVSKLRIRTPSGEFLERRFLASNKLQIVFDFVASKGFPWDEYKLLSTFPRRDVTQLDPNKSLLEVKLFPQETLFLEAKE.

Positions 1–57 (MASNMDREMILADFQACTGIENIDEAITLLEQNNWDLVAAINGVIPQENGILQSEYG) constitute a UBA domain. Residues 62 to 87 (PGPAFNPASHPASAPTSSSSSAFRPV) are disordered. Positions 68–83 (PASHPASAPTSSSSSA) are enriched in low complexity. Ser320 bears the Phosphoserine mark. One can recognise a UBX domain in the interval 569 to 646 (NAEPVSKLRI…KLFPQETLFL (78 aa)). A Phosphothreonine modification is found at Thr580. Position 582 is a phosphoserine (Ser582).

Interacts with CDT1 and ATPase VCP/p97. Interacts (via UBA domain) with FAS (via death domain). Interacts (via UBA domain) with NLRP12 (via DAPIN/PYRIN domain). As to expression, most abundant in testis, slightly less abundant in skeletal muscle and heart, followed by prostate, thymus, ovary, small intestine, and colon. Not detected in the peripheral blood leukocytes.

The protein localises to the nucleus. Ubiquitin-binding protein. Required for the progression of DNA replication forks by targeting DNA replication licensing factor CDT1 for degradation. Potentiates but cannot initiate FAS-induced apoptosis. The chain is FAS-associated factor 1 (FAF1) from Homo sapiens (Human).